A 344-amino-acid chain; its full sequence is tRNA N6-adenosine threonylcarbamoyltransferase (344 aa).

Fe cation is bound by residues H111 and H115. Substrate contacts are provided by residues 134 to 138 (LVSGG), D167, G180, and N273. D301 provides a ligand contact to Fe cation.

The protein belongs to the KAE1 / TsaD family. Fe(2+) serves as cofactor.

It is found in the cytoplasm. The enzyme catalyses L-threonylcarbamoyladenylate + adenosine(37) in tRNA = N(6)-L-threonylcarbamoyladenosine(37) in tRNA + AMP + H(+). Functionally, required for the formation of a threonylcarbamoyl group on adenosine at position 37 (t(6)A37) in tRNAs that read codons beginning with adenine. Is involved in the transfer of the threonylcarbamoyl moiety of threonylcarbamoyl-AMP (TC-AMP) to the N6 group of A37, together with TsaE and TsaB. TsaD likely plays a direct catalytic role in this reaction. This is tRNA N6-adenosine threonylcarbamoyltransferase from Cupriavidus pinatubonensis (strain JMP 134 / LMG 1197) (Cupriavidus necator (strain JMP 134)).